Reading from the N-terminus, the 672-residue chain is Tubulin--tyrosine ligase-like protein 12 (672 aa).

In terms of domain architecture, TTL spans 332 to 670; the sequence is KIKIFLQIFA…LDEIDPTKVT (339 aa). ATP is bound by residues 480–483, K499, and D501; that span reads CEYI.

The protein belongs to the tubulin--tyrosine ligase family.

Its function is as follows. Regulates microtubule dynamics in uterine muscle cells. The sequence is that of Tubulin--tyrosine ligase-like protein 12 from Caenorhabditis briggsae.